Here is a 336-residue protein sequence, read N- to C-terminus: Glycerol-3-phosphate dehydrogenase [NAD(P)+] (336 aa).

NADPH-binding residues include serine 11, tryptophan 12, arginine 33, arginine 34, and lysine 107. Positions 107 and 137 each coordinate sn-glycerol 3-phosphate. NADPH is bound at residue alanine 141. Sn-glycerol 3-phosphate contacts are provided by lysine 192, aspartate 245, serine 255, arginine 256, and asparagine 257. The Proton acceptor role is filled by lysine 192. Arginine 256 serves as a coordination point for NADPH. Glutamate 282 is a binding site for NADPH.

Belongs to the NAD-dependent glycerol-3-phosphate dehydrogenase family.

It is found in the cytoplasm. It catalyses the reaction sn-glycerol 3-phosphate + NAD(+) = dihydroxyacetone phosphate + NADH + H(+). It carries out the reaction sn-glycerol 3-phosphate + NADP(+) = dihydroxyacetone phosphate + NADPH + H(+). The protein operates within membrane lipid metabolism; glycerophospholipid metabolism. Functionally, catalyzes the reduction of the glycolytic intermediate dihydroxyacetone phosphate (DHAP) to sn-glycerol 3-phosphate (G3P), the key precursor for phospholipid synthesis. The protein is Glycerol-3-phosphate dehydrogenase [NAD(P)+] of Thermobifida fusca (strain YX).